A 623-amino-acid polypeptide reads, in one-letter code: Frizzled and smoothened-like protein M (623 aa).

The signal sequence occupies residues 1 to 18 (MKSIFIIIFILYVFQVNS). Residues 19–243 (QTIYPIDPSG…WDQLYNLSNT (225 aa)) are Extracellular-facing. Positions 25–163 (DPSGKCEQYI…NYSEFNLTNY (139 aa)) constitute an FZ domain. Cystine bridges form between C30-C100 and C42-C93. N57, N106, N109, N154, N159, N169, N199, and N239 each carry an N-linked (GlcNAc...) asparagine glycan. Residues 244–264 (LAVLSTFGSLYLLVTFIILNP) traverse the membrane as a helical segment. Over 265–273 (KVTSFDRMY) the chain is Cytoplasmic. The chain crosses the membrane as a helical span at residues 274-294 (GFFNGSVFMMSLSGVILFIAG). Over 295–317 (GPRALIKDGGARISVFEDPLCSS) the chain is Extracellular. Residues 318–338 (TGFIFQLFAINAILFWAYMGF) form a helical membrane-spanning segment. Over 339–354 (DLWWRVKYITKPLNIQ) the chain is Cytoplasmic. Residues 355 to 375 (KYYVPIAFTISFIFSVIPLAT) form a helical membrane-spanning segment. Residues 376 to 397 (KNYRMVRGNIHCWVHKAVLQNT) are Extracellular-facing. The chain crosses the membrane as a helical span at residues 398–418 (LFFGPLGLTLTISTGFIGLVI). The Cytoplasmic segment spans residues 419 to 439 (YEIYKIVKATGRGGIMKLEIK). A helical membrane pass occupies residues 440–460 (PILNIVLIYFSFVYIFAFNFH). Topologically, residues 461–494 (NDNNSKNTYGSIDEFFQCTLESDDPSKCTVGGPS) are extracellular. N463 carries N-linked (GlcNAc...) asparagine glycosylation. The chain crosses the membrane as a helical span at residues 495-515 (IGSLGYFIYCIRIYGIYCFFL). Residues 516–623 (QGLNERAFKI…DIEIGSVNIK (108 aa)) are Cytoplasmic-facing. The disordered stretch occupies residues 552-590 (PSESGNSSTTAGTSTTINNSNINKKNNNSKPTLSTMDSN). Residues 555–580 (SGNSSTTAGTSTTINNSNINKKNNNS) show a composition bias toward low complexity.

It belongs to the G-protein coupled receptor Fz/Smo family.

The protein localises to the membrane. In Dictyostelium discoideum (Social amoeba), this protein is Frizzled and smoothened-like protein M (fslM-1).